Reading from the N-terminus, the 459-residue chain is N-chimaerin (459 aa).

Ala-2 carries the post-translational modification N-acetylalanine. The region spanning 49-135 (EYHGMISREE…IETKAAEYIA (87 aa)) is the SH2 domain. Thr-192 carries the phosphothreonine modification. The segment at 205–255 (VHNFKVHTFRGPHWCEYCANFMWGLIAQGVKCADCGLNVHKQCSKMVPNDC) adopts a Phorbol-ester/DAG-type zinc-finger fold. The Rho-GAP domain occupies 268-459 (CDLTTLVKAH…LLIKNEDILF (192 aa)). Residue Thr-340 is modified to Phosphothreonine.

As to quaternary structure, interacts with EPHA4; effector of EPHA4 in axon guidance linking EPHA4 activation to RAC1 regulation. May also interact with EPHB1 and EPHB2. Post-translationally, phosphorylated. Phosphorylation is EPHA4 kinase activity-dependent.

In terms of biological role, GTPase-activating protein for p21-rac and a phorbol ester receptor. May play an important role in neuronal signal-transduction mechanisms. Involved in the assembly of neuronal locomotor circuits as a direct effector of EPHA4 in axon guidance. The protein is N-chimaerin (Chn1) of Mus musculus (Mouse).